The chain runs to 54 residues: Photoreceptor disk component PRCD (54 aa).

Cys2 is lipidated: S-palmitoyl cysteine. The disordered stretch occupies residues 24-54; the sequence is QPEPNGVDGAVSGSSLETDLQSSGREKEPLK. Positions 35-46 are enriched in polar residues; that stretch reads SGSSLETDLQSS.

This sequence belongs to the PRCD family. In terms of assembly, interacts with RHO/rhodopsin; the interaction promotes PRCD stability. Post-translationally, palmitoylated at Cys-2. Palmitoylation is essential for protein stability and trafficking to the photoreceptor outer segment, but does not appear to be essential for membrane localization. Probably palmitoylated by ZDHHC3. In terms of processing, phosphorylated. As to expression, expressed in retina (at protein level).

The protein resides in the cell projection. Its subcellular location is the cilium. It localises to the photoreceptor outer segment. It is found in the membrane. The protein localises to the endoplasmic reticulum. The protein resides in the golgi apparatus. In terms of biological role, involved in vision. The protein is Photoreceptor disk component PRCD of Bos taurus (Bovine).